The sequence spans 304 residues: Voltage-dependent anion channel-forming protein YneE (304 aa).

Transmembrane regions (helical) follow at residues leucine 28–leucine 48, isoleucine 50–phenylalanine 70, valine 194–leucine 214, and leucine 220–isoleucine 240.

The protein belongs to the anion channel-forming bestrophin (TC 1.A.46) family.

The protein resides in the cell membrane. The polypeptide is Voltage-dependent anion channel-forming protein YneE (yneE) (Escherichia coli O157:H7).